The primary structure comprises 150 residues: uncharacterized protein (150 aa).

It localises to the plastid. The protein resides in the chloroplast. This is an uncharacterized protein from Pyropia yezoensis (Susabi-nori).